We begin with the raw amino-acid sequence, 288 residues long: 33 kDa chaperonin (288 aa).

Disulfide bonds link Cys-225/Cys-227 and Cys-258/Cys-261.

It belongs to the HSP33 family. Post-translationally, under oxidizing conditions two disulfide bonds are formed involving the reactive cysteines. Under reducing conditions zinc is bound to the reactive cysteines and the protein is inactive.

The protein resides in the cytoplasm. Redox regulated molecular chaperone. Protects both thermally unfolding and oxidatively damaged proteins from irreversible aggregation. Plays an important role in the bacterial defense system toward oxidative stress. The sequence is that of 33 kDa chaperonin from Shewanella denitrificans (strain OS217 / ATCC BAA-1090 / DSM 15013).